The chain runs to 433 residues: Histidinol dehydrogenase (433 aa).

NAD(+)-binding residues include Tyr129, Gln191, and Asn214. Substrate is bound by residues Ser237, Gln259, and His262. Zn(2+) is bound by residues Gln259 and His262. Active-site proton acceptor residues include Glu326 and His327. Residues His327, Asp360, Glu414, and His419 each contribute to the substrate site. Asp360 is a binding site for Zn(2+). A Zn(2+)-binding site is contributed by His419.

The protein belongs to the histidinol dehydrogenase family. It depends on Zn(2+) as a cofactor.

It carries out the reaction L-histidinol + 2 NAD(+) + H2O = L-histidine + 2 NADH + 3 H(+). It functions in the pathway amino-acid biosynthesis; L-histidine biosynthesis; L-histidine from 5-phospho-alpha-D-ribose 1-diphosphate: step 9/9. In terms of biological role, catalyzes the sequential NAD-dependent oxidations of L-histidinol to L-histidinaldehyde and then to L-histidine. This is Histidinol dehydrogenase from Methanosarcina mazei (strain ATCC BAA-159 / DSM 3647 / Goe1 / Go1 / JCM 11833 / OCM 88) (Methanosarcina frisia).